Reading from the N-terminus, the 511-residue chain is Maturase K (511 aa).

Belongs to the intron maturase 2 family. MatK subfamily.

The protein localises to the plastid. It is found in the chloroplast. Usually encoded in the trnK tRNA gene intron. Probably assists in splicing its own and other chloroplast group II introns. The sequence is that of Maturase K from Nardus stricta (Mat-grass).